A 117-amino-acid polypeptide reads, in one-letter code: MSNIIKALEDEQLKQDLPKFAPGDTVVVQVKVKEGDRERLQAFEGVVIAIRNRGLHSAFTVRKISNGEGVERTFQTHSPVVNSIEVKRRGAVRRAKLYYLRERSGKSARIKEKLAKK.

It belongs to the bacterial ribosomal protein bL19 family.

In terms of biological role, this protein is located at the 30S-50S ribosomal subunit interface and may play a role in the structure and function of the aminoacyl-tRNA binding site. The protein is Large ribosomal subunit protein bL19 of Aliivibrio fischeri (strain ATCC 700601 / ES114) (Vibrio fischeri).